The primary structure comprises 219 residues: MKPTPKAVVIFSGGQDSTTCLFLAIKEFGKENVEVVTFQYGQRHAIELDKARWIAQDLGVKQTLIDTSVIKAITTNALMDDQAEIKQTGNTPNTFVDGRNALFLLYTAIYAKSQGIQTIYTGVCETDFSGYPDCRDVFIKSMNVTLNLAMDYNFNIRTPLMYLTKKETWALADQLGAFDYIRTHTHTCYLGVEGGCHTCPSCLLREKGLNEYLEEKGNV.

Residue 11-21 (FSGGQDSTTCL) coordinates ATP. Residues Cys188, Cys196, Cys199, and Cys202 each contribute to the Zn(2+) site.

Belongs to the QueC family. It depends on Zn(2+) as a cofactor.

The enzyme catalyses 7-carboxy-7-deazaguanine + NH4(+) + ATP = 7-cyano-7-deazaguanine + ADP + phosphate + H2O + H(+). It participates in purine metabolism; 7-cyano-7-deazaguanine biosynthesis. In terms of biological role, catalyzes the ATP-dependent conversion of 7-carboxy-7-deazaguanine (CDG) to 7-cyano-7-deazaguanine (preQ(0)). The chain is 7-cyano-7-deazaguanine synthase from Glaesserella parasuis serovar 5 (strain SH0165) (Haemophilus parasuis).